The sequence spans 248 residues: Probable transcriptional regulatory protein PP_1214 (248 aa).

Positions 1–21 (MAGHSKWANIKHRKERQDAKR) are disordered.

This sequence belongs to the TACO1 family.

It is found in the cytoplasm. This Pseudomonas putida (strain ATCC 47054 / DSM 6125 / CFBP 8728 / NCIMB 11950 / KT2440) protein is Probable transcriptional regulatory protein PP_1214.